The primary structure comprises 60 residues: Large ribosomal subunit protein uL30 (60 aa).

Belongs to the universal ribosomal protein uL30 family. In terms of assembly, part of the 50S ribosomal subunit.

The sequence is that of Large ribosomal subunit protein uL30 from Streptococcus thermophilus (strain CNRZ 1066).